The following is a 237-amino-acid chain: Phosphoadenosine 5'-phosphosulfate reductase (237 aa).

The Nucleophile; cysteine thiosulfonate intermediate role is filled by cysteine 231.

Belongs to the PAPS reductase family. CysH subfamily.

The protein resides in the cytoplasm. The enzyme catalyses [thioredoxin]-disulfide + sulfite + adenosine 3',5'-bisphosphate + 2 H(+) = [thioredoxin]-dithiol + 3'-phosphoadenylyl sulfate. It functions in the pathway sulfur metabolism; hydrogen sulfide biosynthesis; sulfite from sulfate: step 3/3. Its function is as follows. Catalyzes the formation of sulfite from phosphoadenosine 5'-phosphosulfate (PAPS) using thioredoxin as an electron donor. This is Phosphoadenosine 5'-phosphosulfate reductase from Xylella fastidiosa (strain M12).